Here is a 405-residue protein sequence, read N- to C-terminus: Tryptophan synthase beta chain (405 aa).

At Lys95 the chain carries N6-(pyridoxal phosphate)lysine.

Belongs to the TrpB family. Tetramer of two alpha and two beta chains. The cofactor is pyridoxal 5'-phosphate.

The enzyme catalyses (1S,2R)-1-C-(indol-3-yl)glycerol 3-phosphate + L-serine = D-glyceraldehyde 3-phosphate + L-tryptophan + H2O. It functions in the pathway amino-acid biosynthesis; L-tryptophan biosynthesis; L-tryptophan from chorismate: step 5/5. Its function is as follows. The beta subunit is responsible for the synthesis of L-tryptophan from indole and L-serine. The sequence is that of Tryptophan synthase beta chain from Pseudomonas putida (strain W619).